A 340-amino-acid polypeptide reads, in one-letter code: GTP 3',8-cyclase (340 aa).

Residues 8 to 227 (KLGRPIRDLR…EMIEQNFDIE (220 aa)) form the Radical SAM core domain. Position 17 (Arg17) interacts with GTP. The [4Fe-4S] cluster site is built by Cys24 and Cys28. Tyr30 contributes to the S-adenosyl-L-methionine binding site. Position 31 (Cys31) interacts with [4Fe-4S] cluster. GTP is bound at residue Arg71. S-adenosyl-L-methionine is bound at residue Gly75. Thr102 contributes to the GTP binding site. Ser126 provides a ligand contact to S-adenosyl-L-methionine. A GTP-binding site is contributed by Lys163. Residue Met197 participates in S-adenosyl-L-methionine binding. [4Fe-4S] cluster contacts are provided by Cys261 and Cys264. 266–268 (RAR) serves as a coordination point for GTP. A [4Fe-4S] cluster-binding site is contributed by Cys278.

Belongs to the radical SAM superfamily. MoaA family. In terms of assembly, monomer and homodimer. [4Fe-4S] cluster serves as cofactor.

The enzyme catalyses GTP + AH2 + S-adenosyl-L-methionine = (8S)-3',8-cyclo-7,8-dihydroguanosine 5'-triphosphate + 5'-deoxyadenosine + L-methionine + A + H(+). It participates in cofactor biosynthesis; molybdopterin biosynthesis. Functionally, catalyzes the cyclization of GTP to (8S)-3',8-cyclo-7,8-dihydroguanosine 5'-triphosphate. In Staphylococcus saprophyticus subsp. saprophyticus (strain ATCC 15305 / DSM 20229 / NCIMB 8711 / NCTC 7292 / S-41), this protein is GTP 3',8-cyclase.